The primary structure comprises 317 residues: tRNA uridine(34) hydroxylase (317 aa).

The 95-residue stretch at threonine 129–serine 223 folds into the Rhodanese domain. Cysteine 183 acts as the Cysteine persulfide intermediate in catalysis. The interval alanine 298–alanine 317 is disordered.

Belongs to the TrhO family.

The enzyme catalyses uridine(34) in tRNA + AH2 + O2 = 5-hydroxyuridine(34) in tRNA + A + H2O. Catalyzes oxygen-dependent 5-hydroxyuridine (ho5U) modification at position 34 in tRNAs. The sequence is that of tRNA uridine(34) hydroxylase from Pseudomonas syringae pv. tomato (strain ATCC BAA-871 / DC3000).